A 361-amino-acid polypeptide reads, in one-letter code: MPVDSLVGKTPESSAGIHGWGAYVPVYRIPTREIARVWGWPDHQWKALDVYEKAVGGVDEDSTTMGVEAARNAIARARVDPASIGAVFFGSESKPYAVKPSATIIAEALGITPVTMASDLEFACRAASEGMRASIGLVASGVVGYTLVVGSDTAQASPGDVLEFSASSGAAAFVIGPSKGAAAVFESSFTYVTDTPDFWRRGLKPYPSHGEGFTGEPAYFHHIESAVKGLFEKTGLSPGDFDYAIFHQPNGKFPVKVAKKLGFTMEQVKPGLVTPFIGNTYNASALLGLVKVLDVAKPGDRILVAPFGSGAGSDAYSLIVTDAIEEAKPLAQPLEYYLKRRIEIDYGVYAKIRGKLVVRKL.

The Proton donor/acceptor role is filled by Glu-92. Residue Cys-124 is the Acyl-thioester intermediate of the active site. 4 residues coordinate (3S)-3-hydroxy-3-methylglutaryl-CoA: Cys-124, Ser-165, Thr-214, and His-247. His-247 (proton donor/acceptor) is an active-site residue. Residue Lys-252 participates in CoA binding. Lys-256, Asn-279, and Ser-309 together coordinate (3S)-3-hydroxy-3-methylglutaryl-CoA.

The protein belongs to the thiolase-like superfamily. Archaeal HMG-CoA synthase family. In terms of assembly, interacts with acetoacetyl-CoA thiolase that catalyzes the precedent step in the pathway and with a DUF35 protein. The acetoacetyl-CoA thiolase/HMG-CoA synthase complex channels the intermediate via a fused CoA-binding site, which allows for efficient coupling of the endergonic thiolase reaction with the exergonic HMGCS reaction.

It catalyses the reaction acetoacetyl-CoA + acetyl-CoA + H2O = (3S)-3-hydroxy-3-methylglutaryl-CoA + CoA + H(+). Its pathway is metabolic intermediate biosynthesis; (R)-mevalonate biosynthesis; (R)-mevalonate from acetyl-CoA: step 2/3. In terms of biological role, catalyzes the condensation of acetyl-CoA with acetoacetyl-CoA to form 3-hydroxy-3-methylglutaryl-CoA (HMG-CoA). Functions in the mevalonate (MVA) pathway leading to isopentenyl diphosphate (IPP), a key precursor for the biosynthesis of isoprenoid compounds that are building blocks of archaeal membrane lipids. This Aeropyrum pernix (strain ATCC 700893 / DSM 11879 / JCM 9820 / NBRC 100138 / K1) protein is Hydroxymethylglutaryl-CoA synthase.